Here is a 152-residue protein sequence, read N- to C-terminus: Succinate dehydrogenase [ubiquinone] cytochrome b small subunit A, mitochondrial (152 aa).

The transit peptide at 1 to 21 (MVTVLRLSSLCRANRASAFKS) directs the protein to the mitochondrion. Topologically, residues 22-56 (LLIRPVPCLSQDLHTVQTSQIHTSQNHHAASKAAS) are mitochondrial matrix. Residues 57-78 (LHWTSERALSVALLGLLPAAYL) traverse the membrane as a helical segment. Over 79–83 (YPGAA) the chain is Mitochondrial intermembrane. A helical membrane pass occupies residues 84 to 104 (VDYSLAAALTLHGHWGLGQVV). His95 serves as a coordination point for heme b. The Mitochondrial matrix portion of the chain corresponds to 105 to 113 (TDYVHGDAK). Tyr107 provides a ligand contact to a ubiquinone. Residues 114–135 (IKLANTSLFALSALTFAGLCYF) form a helical membrane-spanning segment. Residues 136 to 152 (NYHDVGICKAVAMLWSL) are Mitochondrial intermembrane-facing.

It belongs to the CybS family. Component of complex II composed of four subunits: the flavoprotein (FP) SDHA, iron-sulfur protein (IP) SDHB, and a cytochrome b560 composed of SDHC and SDHD.

Its subcellular location is the mitochondrion inner membrane. It participates in carbohydrate metabolism; tricarboxylic acid cycle. Membrane-anchoring subunit of succinate dehydrogenase (SDH) that is involved in complex II of the mitochondrial electron transport chain and is responsible for transferring electrons from succinate to ubiquinone (coenzyme Q). SDH also oxidizes malate to the non-canonical enol form of oxaloacetate, enol-oxaloacetate. Enol-oxaloacetate, which is a potent inhibitor of the succinate dehydrogenase activity, is further isomerized into keto-oxaloacetate. The polypeptide is Succinate dehydrogenase [ubiquinone] cytochrome b small subunit A, mitochondrial (sdhd-a) (Xenopus laevis (African clawed frog)).